The chain runs to 1071 residues: ATP-dependent helicase/deoxyribonuclease subunit B (1071 aa).

The protein belongs to the helicase family. AddB/RexB type 2 subfamily. Heterodimer of AddA and RexB. Mg(2+) is required as a cofactor.

In terms of biological role, the heterodimer acts as both an ATP-dependent DNA helicase and an ATP-dependent, dual-direction single-stranded exonuclease. Recognizes the chi site generating a DNA molecule suitable for the initiation of homologous recombination. This subunit has 5' -&gt; 3' nuclease activity but not helicase activity. The protein is ATP-dependent helicase/deoxyribonuclease subunit B of Streptococcus pyogenes serotype M3 (strain ATCC BAA-595 / MGAS315).